The primary structure comprises 602 residues: MPRMTQLDLIRNFSIVAHIDHGKSTLADRLIQLTGTVAERDMKAQILDSMEIERERGITIKANTVRIDYPAKDGRTYVLNLIDTPGHVDFAYEVSRSMRAVEGSLLVVDASQGVEAQTLANVYQALDAGHEIVPVLNKIDLPAAEPERVKSQIEDVIGLDASDAVLISAKSGLGIPDVLEAIVHRLPPPKGDREAPLKAMLVDSWYDAYLGVVVMIRVMDGVIRKGDRVKMMQTGAVYGIDRLAVLKPQMVDIAELGPGEIGVLTASIKQVRDTRVGDTITHEKKGCAAPLPGFKPAQPVVFCGLFPVDANDFEALREAMEKLALNDASFTYEMETSAALGFGFRCGFLGLLHLEVVRDRLEREYDLDLITTAPSVVYQIYMKDGTLQELHNPTDMPDLTYVDHIEEPRIRATIMVPDEYLGDVLKLCQDRRGIQLDLSYAGARAMVVYDLPLNEVVFDFYDRLKSVTKGYASFDYQITGYREDFLVKMSILVNDEPVDALSMMVHRDRADMRGRAMVEKLKELIPRHMFKIPIQAAIGGRVIARETISAMRKDVTAKCYGGDATRKRKLLDKQKAGKKKMRQFGKVEIPQQAFINALKMDS.

In terms of domain architecture, tr-type G spans 8 to 190; it reads DLIRNFSIVA…AIVHRLPPPK (183 aa). GTP is bound by residues 20–25 and 137–140; these read DHGKST and NKID.

Belongs to the TRAFAC class translation factor GTPase superfamily. Classic translation factor GTPase family. LepA subfamily.

It localises to the cell inner membrane. The catalysed reaction is GTP + H2O = GDP + phosphate + H(+). Required for accurate and efficient protein synthesis under certain stress conditions. May act as a fidelity factor of the translation reaction, by catalyzing a one-codon backward translocation of tRNAs on improperly translocated ribosomes. Back-translocation proceeds from a post-translocation (POST) complex to a pre-translocation (PRE) complex, thus giving elongation factor G a second chance to translocate the tRNAs correctly. Binds to ribosomes in a GTP-dependent manner. The chain is Elongation factor 4 from Cereibacter sphaeroides (strain KD131 / KCTC 12085) (Rhodobacter sphaeroides).